The chain runs to 554 residues: Urocanate hydratase (554 aa).

NAD(+) contacts are provided by residues 52–53, glutamine 130, 176–178, glutamate 196, arginine 201, 242–243, 263–267, 273–274, and tyrosine 322; these read GG, GMG, NA, QTSAH, and YL. Residue cysteine 410 is part of the active site. Glycine 492 provides a ligand contact to NAD(+).

This sequence belongs to the urocanase family. The cofactor is NAD(+).

The protein resides in the cytoplasm. It carries out the reaction 4-imidazolone-5-propanoate = trans-urocanate + H2O. The protein operates within amino-acid degradation; L-histidine degradation into L-glutamate; N-formimidoyl-L-glutamate from L-histidine: step 2/3. In terms of biological role, catalyzes the conversion of urocanate to 4-imidazolone-5-propionate. The chain is Urocanate hydratase from Shewanella halifaxensis (strain HAW-EB4).